The primary structure comprises 213 residues: MTKMSRYALITALAMFLAGCVGQREPAPVEEVKPAPEQPAEPQQPVPTVPSVPTIPQQPGPIEHEDQTAPPAPHIRHYDWNGAMQPMVSKMLGADGVTAGSVLLVDSVNNRTNGSLNAAEATETLRNALANNGKFTLVSAQQLSMAKQQLGLSPQDSLGTRSKAIGIARNVGAHYVLYSSASGNVNAPTLQMQLMLVQTGEIIWSGKGAVSQQ.

Positions 1–19 (MTKMSRYALITALAMFLAG) are cleaved as a signal peptide. Cysteine 20 carries N-palmitoyl cysteine lipidation. Cysteine 20 carries S-diacylglycerol cysteine lipidation. Residues 28-74 (PVEEVKPAPEQPAEPQQPVPTVPSVPTIPQQPGPIEHEDQTAPPAPH) form a disordered region. A compositionally biased stretch (pro residues) spans 36–50 (PEQPAEPQQPVPTVP).

It belongs to the LpoB family. In terms of assembly, interacts with PBP1b.

It localises to the cell outer membrane. In terms of biological role, regulator of peptidoglycan synthesis that is essential for the function of penicillin-binding protein 1B (PBP1b). The chain is Penicillin-binding protein activator LpoB from Escherichia coli O157:H7.